Here is a 714-residue protein sequence, read N- to C-terminus: Protein BLISTER (714 aa).

Disordered stretches follow at residues 1–113 (MASA…VDFS), 219–261 (SSYL…KRSR), 288–325 (VTSSGSQLSGSDGFGPSYISGRRDSNGPSSLTSGASDY), and 519–576 (MVQK…SSNT). Positions 8–33 (RRQEDVEAGRRKLEQFRKRKAAEKAK) are enriched in basic and acidic residues. 2 stretches are compositionally biased toward polar residues: residues 36–50 (SQNTQPVDNSQQSVI) and 58–74 (SISNGPLKQSAESTSNE). Positions 92 to 102 (DGSKERSRQDD) are enriched in basic and acidic residues. Polar residues-rich tracts occupy residues 219–253 (SSYLFNSPDTSSRPSEPSDFSVNITSSSPLNSAKS), 288–297 (VTSSGSQLSG), 313–322 (NGPSSLTSGA), and 519–561 (MVQK…SSNQ). Residues 356–525 (NDDFTALEQH…LQTMVQKASS (170 aa)) are a coiled coil. A compositionally biased stretch (low complexity) spans 562–576 (ETDSTTLLESDSSNT).

As to quaternary structure, interacts with CLF. As to expression, expressed in root tips, emerging lateral roots, shoot apical meristem (SAM), vasculature of cotyledons, leaves, sepals and carpels.

The protein localises to the nucleus. It localises to the cytoplasm. Its function is as follows. Is required for normal leaf, flower and seed development and controls cotyledon and leaf patterning by inhibiting premature differentiation. Regulates the expression of a subset of PcG target genes. Is required for the repression of the floral specific genes PI, SEP2, and SEP3, but also for the activation of FLC. Involved in response to cold. Involved in the regulation of COR15A, COR15B, BAM3 and AMY3 transcripts, and ascorbate levels in response to prolonged chilling temperatures. The chain is Protein BLISTER from Arabidopsis thaliana (Mouse-ear cress).